We begin with the raw amino-acid sequence, 151 residues long: Ribosome maturation factor RimP (151 aa).

The protein belongs to the RimP family.

The protein localises to the cytoplasm. Required for maturation of 30S ribosomal subunits. The polypeptide is Ribosome maturation factor RimP (Caldicellulosiruptor bescii (strain ATCC BAA-1888 / DSM 6725 / KCTC 15123 / Z-1320) (Anaerocellum thermophilum)).